The following is a 439-amino-acid chain: Apolipoprotein N-acyltransferase (439 aa).

6 helical membrane-spanning segments follow: residues 13-33 (LLAG…FLVF), 47-67 (LFSF…IPLI), 75-95 (FIAY…QFGL), 97-117 (YLLW…YTLV), 149-169 (NAGT…FPLF), and 175-195 (IFSL…ETSY). The CN hydrolase domain maps to 207–439 (IQPFVPQDVK…GSRGILLFSF (233 aa)). The Proton acceptor role is filled by E248. Residue K305 is part of the active site. The Nucleophile role is filled by C355.

This sequence belongs to the CN hydrolase family. Apolipoprotein N-acyltransferase subfamily.

Its subcellular location is the cell inner membrane. It catalyses the reaction N-terminal S-1,2-diacyl-sn-glyceryl-L-cysteinyl-[lipoprotein] + a glycerophospholipid = N-acyl-S-1,2-diacyl-sn-glyceryl-L-cysteinyl-[lipoprotein] + a 2-acyl-sn-glycero-3-phospholipid + H(+). It participates in protein modification; lipoprotein biosynthesis (N-acyl transfer). Catalyzes the phospholipid dependent N-acylation of the N-terminal cysteine of apolipoprotein, the last step in lipoprotein maturation. This is Apolipoprotein N-acyltransferase from Aquifex aeolicus (strain VF5).